The chain runs to 465 residues: Gamma-aminobutyric acid receptor subunit rho-2 (465 aa).

A signal peptide spans Met-1–Ser-20. Over Arg-21 to His-260 the chain is Extracellular. A 4-aminobutanoate-binding site is contributed by Arg-105. N-linked (GlcNAc...) asparagine glycosylation occurs at Asn-120. Position 169 (Ser-169) interacts with 4-aminobutanoate. Cysteines 178 and 192 form a disulfide. Glu-197 lines the 4-aminobutanoate pocket. Asn-254 is a glycosylation site (N-linked (GlcNAc...) asparagine). A helical membrane pass occupies residues Ile-261–Val-281. Over Ser-282–Arg-293 the chain is Cytoplasmic. Residues Val-294–Ser-314 traverse the membrane as a helical segment. The Extracellular segment spans residues Met-315–Asp-325. Residues Ile-326 to Asn-346 form a helical membrane-spanning segment. At Tyr-347–Tyr-444 the chain is on the cytoplasmic side. The chain crosses the membrane as a helical span at residues Ser-445–Ala-465.

The protein belongs to the ligand-gated ion channel (TC 1.A.9) family. Gamma-aminobutyric acid receptor (TC 1.A.9.5) subfamily. GABRR2 sub-subfamily. In terms of assembly, three rho subunits (rho-1/GBRR1, rho-2/GBRR2 and rho-3/GBRR3) coassemble either to form functional homopentamers or heteropentamers. Rho-2 is unable to form a functional homopentamer. Interacts with SQSTM1.

It is found in the postsynaptic cell membrane. Its subcellular location is the cell membrane. It carries out the reaction chloride(in) = chloride(out). Its function is as follows. Rho subunit of the pentameric ligand-gated chloride channels responsible for mediating the effects of gamma-aminobutyric acid (GABA), the major inhibitory neurotransmitter in the brain. Rho-containing GABA-gated chloride channels are a subclass of GABA(A) receptors (GABAARs) entirely composed of rho subunits, where GABA molecules bind at the rho intersubunit interfaces. When activated by GABA, rho-GABAARs selectively allow the flow of chloride anions across the cell membrane down their electrochemical gradient. Rho-2 GABAARs may contribute to the regulation of glial development in the cerebellum by controlling extrasynaptic transmission. Rho-2 GABAARs are also involved in neuronal tonic (extrasynaptic) and phasic (synaptic) transmission in the Purkinje neurons of the cerebellum. Rho-2 GABAARs expressed in retina may play a role in retinal neurotransmission. The sequence is that of Gamma-aminobutyric acid receptor subunit rho-2 (GABRR2) from Bos taurus (Bovine).